We begin with the raw amino-acid sequence, 97 residues long: Co-chaperonin GroES (97 aa).

This sequence belongs to the GroES chaperonin family. Heptamer of 7 subunits arranged in a ring. Interacts with the chaperonin GroEL.

The protein resides in the cytoplasm. In terms of biological role, together with the chaperonin GroEL, plays an essential role in assisting protein folding. The GroEL-GroES system forms a nano-cage that allows encapsulation of the non-native substrate proteins and provides a physical environment optimized to promote and accelerate protein folding. GroES binds to the apical surface of the GroEL ring, thereby capping the opening of the GroEL channel. This chain is Co-chaperonin GroES, found in Stutzerimonas stutzeri (strain A1501) (Pseudomonas stutzeri).